Reading from the N-terminus, the 648-residue chain is ATPase family AAA domain-containing protein 3B (648 aa).

2 disordered regions span residues 1–54 and 111–134; these read MSWL…DPTG and QAEE…QYQD. Ser2 is subject to N-acetylserine. The Mitochondrial intermembrane portion of the chain corresponds to 2–246; it reads SWLFGVNKGP…FRAFVTDRDK (245 aa). A compositionally biased stretch (pro residues) spans 17 to 26; sequence GPPPPLPPAQ. Basic and acidic residues-rich tracts occupy residues 32–48 and 111–125; these read GGDR…DKWS and QAEE…ETRQ. Residues 69–214 are a coiled coil; that stretch reads RYAKEALNLA…DIIREQIRLK (146 aa). Residues 247-264 constitute an intramembrane region (helical); that stretch reads VTATVAGLTLLAVGVYSA. Over 265–648 the chain is Mitochondrial intermembrane; sequence KNATAVTGRF…PFCPPGHPLL (384 aa). 352–359 contributes to the ATP binding site; it reads GPPGTGKT. Lys427 and Lys495 each carry N6-acetyllysine.

Belongs to the AAA ATPase family. In terms of assembly, forms heterooligomers with ATAD3A. Interacts with components of the mitochondrial ribosome, including MRPL11 and MRPS18B, and with other proteins involved in mitochondrial RNA metabolism, possibly via interaction with ATAD3A. Interacts with GADD45GIP1. In terms of tissue distribution, tends to be down-regulated in differentiated cells and re-expressed in pluripotent stem cells or cancer cells (at protein level).

The protein localises to the mitochondrion inner membrane. In terms of biological role, may play a role in a mitochondrial network organization typical for stem cells, characterized by reduced mitochondrial metabolism, low mtDNA copies and fragmentated mitochondrial network. May act by suppressing ATAD3A function, interfering with ATAD3A interaction with matrix nucleoid complexes. This chain is ATPase family AAA domain-containing protein 3B (ATAD3B), found in Homo sapiens (Human).